Reading from the N-terminus, the 475-residue chain is Ribulose bisphosphate carboxylase large chain (475 aa).

Positions Met-1–Ser-2 are excised as a propeptide. Pro-3 is modified (N-acetylproline). Lys-14 carries the post-translational modification N6,N6,N6-trimethyllysine. Residues Asn-123 and Thr-173 each contribute to the substrate site. The active-site Proton acceptor is Lys-175. Position 177 (Lys-177) interacts with substrate. Mg(2+)-binding residues include Lys-201, Asp-203, and Glu-204. N6-carboxylysine is present on Lys-201. His-294 serves as the catalytic Proton acceptor. Residues Arg-295, His-327, and Ser-379 each contribute to the substrate site.

This sequence belongs to the RuBisCO large chain family. Type I subfamily. In terms of assembly, heterohexadecamer of 8 large chains and 8 small chains; disulfide-linked. The disulfide link is formed within the large subunit homodimers. It depends on Mg(2+) as a cofactor. Post-translationally, the disulfide bond which can form in the large chain dimeric partners within the hexadecamer appears to be associated with oxidative stress and protein turnover.

The protein localises to the plastid. It is found in the chloroplast. It carries out the reaction 2 (2R)-3-phosphoglycerate + 2 H(+) = D-ribulose 1,5-bisphosphate + CO2 + H2O. The enzyme catalyses D-ribulose 1,5-bisphosphate + O2 = 2-phosphoglycolate + (2R)-3-phosphoglycerate + 2 H(+). Functionally, ruBisCO catalyzes two reactions: the carboxylation of D-ribulose 1,5-bisphosphate, the primary event in carbon dioxide fixation, as well as the oxidative fragmentation of the pentose substrate in the photorespiration process. Both reactions occur simultaneously and in competition at the same active site. The sequence is that of Ribulose bisphosphate carboxylase large chain from Clarkia xantiana (Gunsight clarkia).